A 164-amino-acid polypeptide reads, in one-letter code: tRNA (cytidine(34)-2'-O)-methyltransferase (164 aa).

Methionine 80, glycine 102, valine 124, and serine 132 together coordinate S-adenosyl-L-methionine.

The protein belongs to the class IV-like SAM-binding methyltransferase superfamily. RNA methyltransferase TrmH family. TrmL subfamily. In terms of assembly, homodimer.

The protein localises to the cytoplasm. It catalyses the reaction cytidine(34) in tRNA + S-adenosyl-L-methionine = 2'-O-methylcytidine(34) in tRNA + S-adenosyl-L-homocysteine + H(+). The enzyme catalyses 5-carboxymethylaminomethyluridine(34) in tRNA(Leu) + S-adenosyl-L-methionine = 5-carboxymethylaminomethyl-2'-O-methyluridine(34) in tRNA(Leu) + S-adenosyl-L-homocysteine + H(+). In terms of biological role, methylates the ribose at the nucleotide 34 wobble position in the two leucyl isoacceptors tRNA(Leu)(CmAA) and tRNA(Leu)(cmnm5UmAA). Catalyzes the methyl transfer from S-adenosyl-L-methionine to the 2'-OH of the wobble nucleotide. This is tRNA (cytidine(34)-2'-O)-methyltransferase from Polaromonas sp. (strain JS666 / ATCC BAA-500).